The chain runs to 804 residues: Exocyst complex component 6 (804 aa).

Belongs to the SEC15 family. The exocyst complex is composed of EXOC1, EXOC2, EXOC3, EXOC4, EXOC5, EXOC6, EXOC7 and EXOC8. Interacts with CNTRL. Interacts with RAB11A in a GTP-dependent manner.

The protein localises to the cytoplasm. Its subcellular location is the perinuclear region. It is found in the cell projection. It localises to the growth cone. The protein resides in the midbody. The protein localises to the midbody ring. Functionally, component of the exocyst complex involved in the docking of exocytic vesicles with fusion sites on the plasma membrane. Together with RAB11A, RAB3IP, RAB8A, PARD3, PRKCI, ANXA2, CDC42 and DNMBP promotes transcytosis of PODXL to the apical membrane initiation sites (AMIS), apical surface formation and lumenogenesis. This is Exocyst complex component 6 (EXOC6) from Homo sapiens (Human).